The primary structure comprises 640 residues: Protein SPT10 (640 aa).

Residues 1–30 (MLNQHTSSVPDDEHLQMAHQNSSSEVRNEA) are disordered. In terms of domain architecture, N-acetyltransferase spans 121–259 (LDYSMDTEAD…AGILKGFDVP (139 aa)). A disordered region spans residues 534–565 (PHLTNNESQDHANPVNRDERDMNHSVPDLDRN). Over residues 549–565 (NRDERDMNHSVPDLDRN) the composition is skewed to basic and acidic residues.

Required for normal transcription at a number of loci in yeast. Affects transcription at Ty1 elements, at PHO5, STE6 and ADH2. The sequence is that of Protein SPT10 (SPT10) from Saccharomyces cerevisiae (strain ATCC 204508 / S288c) (Baker's yeast).